The following is a 71-amino-acid chain: UPF0346 protein SUB0487 (71 aa).

This sequence belongs to the UPF0346 family.

In Streptococcus uberis (strain ATCC BAA-854 / 0140J), this protein is UPF0346 protein SUB0487.